We begin with the raw amino-acid sequence, 312 residues long: Acetyl-coenzyme A carboxylase carboxyl transferase subunit alpha (312 aa).

A CoA carboxyltransferase C-terminal domain is found at 25 to 286; the sequence is GDDSAVEILK…GNYIIEKLNE (262 aa).

Belongs to the AccA family. In terms of assembly, acetyl-CoA carboxylase is a heterohexamer composed of biotin carboxyl carrier protein (AccB), biotin carboxylase (AccC) and two subunits each of ACCase subunit alpha (AccA) and ACCase subunit beta (AccD).

It is found in the cytoplasm. It carries out the reaction N(6)-carboxybiotinyl-L-lysyl-[protein] + acetyl-CoA = N(6)-biotinyl-L-lysyl-[protein] + malonyl-CoA. Its pathway is lipid metabolism; malonyl-CoA biosynthesis; malonyl-CoA from acetyl-CoA: step 1/1. Its function is as follows. Component of the acetyl coenzyme A carboxylase (ACC) complex. First, biotin carboxylase catalyzes the carboxylation of biotin on its carrier protein (BCCP) and then the CO(2) group is transferred by the carboxyltransferase to acetyl-CoA to form malonyl-CoA. This chain is Acetyl-coenzyme A carboxylase carboxyl transferase subunit alpha, found in Campylobacter hominis (strain ATCC BAA-381 / DSM 21671 / CCUG 45161 / LMG 19568 / NCTC 13146 / CH001A).